Consider the following 344-residue polypeptide: Outer membrane protein assembly factor BamC (344 aa).

An N-terminal signal peptide occupies residues 1–24; that stretch reads MAYSVQKSRLAKVAGVSLVLLLAA. Cys-25 carries the N-palmitoyl cysteine lipid modification. Residue Cys-25 is the site of S-diacylglycerol cysteine attachment.

It belongs to the BamC family. Part of the Bam complex, which is composed of the outer membrane protein BamA, and four lipoproteins BamB, BamC, BamD and BamE. Forms a subcomplex with BamD and BamE. The Bam complex has the shape of a hat, with the BamA beta-barrel crown in the outer membrane and the periplasmic brim formed by the BamA POTRA domains and the 4 lipoproteins.

It is found in the cell outer membrane. Its function is as follows. Part of the outer membrane protein assembly complex (Bam), which is involved in assembly and insertion of beta-barrel proteins into the outer membrane. Nonessential member of the complex that stabilizes the interaction between the essential proteins BamA and BamD. Efficient substrate folding and insertion into the outer membrane requires all 5 subunits. A lateral gate may open between the first and last strands of the BamA beta-barrel that allows substrate to insert into the outer membrane; comparison of the structures of complete and nearly complete Bam complexes show there is considerable movement of all 5 proteins. The chain is Outer membrane protein assembly factor BamC from Escherichia coli (strain K12).